The following is a 348-amino-acid chain: Trans-L-3-hydroxyproline dehydratase (348 aa).

Cys101 serves as the catalytic Proton acceptor. Substrate contacts are provided by residues 102 to 103 (GH), Asp263, and 268 to 269 (GS).

The protein belongs to the proline racemase family. Homodimer.

It carries out the reaction trans-3-hydroxy-L-proline = 1-pyrroline-2-carboxylate + H2O. Its function is as follows. Catalyzes the dehydration of trans-3-hydroxy-L-proline to delta-1-pyrroline-2-carboxylate (Pyr2C). This is Trans-L-3-hydroxyproline dehydratase (l3hypdh) from Xenopus tropicalis (Western clawed frog).